The following is a 156-amino-acid chain: 3-hydroxyacyl-[acyl-carrier-protein] dehydratase FabZ (156 aa).

The active site involves His-57.

This sequence belongs to the thioester dehydratase family. FabZ subfamily.

Its subcellular location is the cytoplasm. It catalyses the reaction a (3R)-hydroxyacyl-[ACP] = a (2E)-enoyl-[ACP] + H2O. Functionally, involved in unsaturated fatty acids biosynthesis. Catalyzes the dehydration of short chain beta-hydroxyacyl-ACPs and long chain saturated and unsaturated beta-hydroxyacyl-ACPs. This Anaeromyxobacter sp. (strain K) protein is 3-hydroxyacyl-[acyl-carrier-protein] dehydratase FabZ.